A 223-amino-acid polypeptide reads, in one-letter code: Probable transaldolase (223 aa).

K91 functions as the Schiff-base intermediate with substrate in the catalytic mechanism.

The protein belongs to the transaldolase family. Type 3B subfamily.

It is found in the cytoplasm. The catalysed reaction is D-sedoheptulose 7-phosphate + D-glyceraldehyde 3-phosphate = D-erythrose 4-phosphate + beta-D-fructose 6-phosphate. It participates in carbohydrate degradation; pentose phosphate pathway; D-glyceraldehyde 3-phosphate and beta-D-fructose 6-phosphate from D-ribose 5-phosphate and D-xylulose 5-phosphate (non-oxidative stage): step 2/3. Functionally, transaldolase is important for the balance of metabolites in the pentose-phosphate pathway. This is Probable transaldolase from Chlorobium phaeobacteroides (strain BS1).